The following is a 135-amino-acid chain: ATP synthase epsilon chain (135 aa).

The tract at residues 84 to 107 is disordered; the sequence is SLSEEKQSEEQKQRLERAKKALSS. Positions 86-102 are enriched in basic and acidic residues; it reads SEEKQSEEQKQRLERAK.

This sequence belongs to the ATPase epsilon chain family. F-type ATPases have 2 components, CF(1) - the catalytic core - and CF(0) - the membrane proton channel. CF(1) has five subunits: alpha(3), beta(3), gamma(1), delta(1), epsilon(1). CF(0) has three main subunits: a, b and c.

The protein localises to the cell membrane. In terms of biological role, produces ATP from ADP in the presence of a proton gradient across the membrane. The sequence is that of ATP synthase epsilon chain from Elusimicrobium minutum (strain Pei191).